The chain runs to 189 residues: Small ribosomal subunit protein uS4 (189 aa).

Residues 107–178 (RRLQTQVFKL…AGRVKRKNQG (72 aa)) form the S4 RNA-binding domain. A disordered region spans residues 160–189 (HNSPYGGGRAGRVKRKNQGKGGEEGAEEEE).

This sequence belongs to the universal ribosomal protein uS4 family. As to quaternary structure, component of the small ribosomal subunit. Mature ribosomes consist of a small (40S) and a large (60S) subunit. The 40S subunit contains about 32 different proteins and 1 molecule of RNA (18S). The 60S subunit contains 45 different proteins and 3 molecules of RNA (25S, 5.8S and 5S).

The protein localises to the cytoplasm. Component of the ribosome, a large ribonucleoprotein complex responsible for the synthesis of proteins in the cell. The small ribosomal subunit (SSU) binds messenger RNAs (mRNAs) and translates the encoded message by selecting cognate aminoacyl-transfer RNA (tRNA) molecules. The large subunit (LSU) contains the ribosomal catalytic site termed the peptidyl transferase center (PTC), which catalyzes the formation of peptide bonds, thereby polymerizing the amino acids delivered by tRNAs into a polypeptide chain. The nascent polypeptides leave the ribosome through a tunnel in the LSU and interact with protein factors that function in enzymatic processing, targeting, and the membrane insertion of nascent chains at the exit of the ribosomal tunnel. RPS9B is involved in nucleolar processing of pre-18S ribosomal RNA and ribosome assembly. The sequence is that of Small ribosomal subunit protein uS4 (RPS9B) from Candida albicans (strain SC5314 / ATCC MYA-2876) (Yeast).